A 115-amino-acid polypeptide reads, in one-letter code: Large ribosomal subunit protein bL19 (115 aa).

The protein belongs to the bacterial ribosomal protein bL19 family.

Functionally, this protein is located at the 30S-50S ribosomal subunit interface and may play a role in the structure and function of the aminoacyl-tRNA binding site. This chain is Large ribosomal subunit protein bL19, found in Tolumonas auensis (strain DSM 9187 / NBRC 110442 / TA 4).